The following is a 400-amino-acid chain: Exodeoxyribonuclease 7 large subunit (400 aa).

Belongs to the XseA family. Heterooligomer composed of large and small subunits.

It localises to the cytoplasm. It catalyses the reaction Exonucleolytic cleavage in either 5'- to 3'- or 3'- to 5'-direction to yield nucleoside 5'-phosphates.. Its function is as follows. Bidirectionally degrades single-stranded DNA into large acid-insoluble oligonucleotides, which are then degraded further into small acid-soluble oligonucleotides. This is Exodeoxyribonuclease 7 large subunit from Clostridium perfringens (strain ATCC 13124 / DSM 756 / JCM 1290 / NCIMB 6125 / NCTC 8237 / Type A).